Reading from the N-terminus, the 37-residue chain is KLPEAYAIFDPLVDVLPVIPVLFFALAFVVQAAVGFR.

The Lumenal segment spans residues Lys1–Val15. Residues Leu16 to Val30 traverse the membrane as a helical segment. At Gln31 to Arg37 the chain is on the cytoplasmic side.

The protein belongs to the PsbK family. In terms of assembly, PSII is composed of 1 copy each of membrane proteins PsbA, PsbB, PsbC, PsbD, PsbE, PsbF, PsbH, PsbI, PsbJ, PsbK, PsbL, PsbM, PsbT, PsbX, PsbY, PsbZ, Psb30/Ycf12, peripheral proteins PsbO, CyanoQ (PsbQ), PsbU, PsbV and a large number of cofactors. It forms dimeric complexes. The cofactor is PSII binds multiple chlorophylls, carotenoids and specific lipids..

It is found in the cellular thylakoid membrane. Functionally, one of the components of the core complex of photosystem II (PSII). PSII is a light-driven water:plastoquinone oxidoreductase that uses light energy to abstract electrons from H(2)O, generating O(2) and a proton gradient subsequently used for ATP formation. It consists of a core antenna complex that captures photons, and an electron transfer chain that converts photonic excitation into a charge separation. The polypeptide is Photosystem II reaction center protein K (Thermostichus vulcanus (Synechococcus vulcanus)).